The following is a 125-amino-acid chain: Large ribosomal subunit protein bL12 (125 aa).

The protein belongs to the bacterial ribosomal protein bL12 family. Homodimer. Part of the ribosomal stalk of the 50S ribosomal subunit. Forms a multimeric L10(L12)X complex, where L10 forms an elongated spine to which 2 to 4 L12 dimers bind in a sequential fashion. Binds GTP-bound translation factors.

Functionally, forms part of the ribosomal stalk which helps the ribosome interact with GTP-bound translation factors. Is thus essential for accurate translation. The sequence is that of Large ribosomal subunit protein bL12 from Methylorubrum extorquens (strain CM4 / NCIMB 13688) (Methylobacterium extorquens).